Reading from the N-terminus, the 252-residue chain is E3 ubiquitin-protein ligase MARCHF3 (252 aa).

The segment at 62 to 122 (SSFNDHPMCR…ELCHFRFSVE (61 aa)) adopts an RING-CH-type zinc-finger fold. Cysteine 70, cysteine 73, cysteine 86, cysteine 88, histidine 96, cysteine 99, cysteine 112, and cysteine 115 together coordinate Zn(2+). Helical transmembrane passes span 144-164 (LFGDMVCFLFITPLATISGWL) and 181-201 (AVGLIALTVALFTIYLFWTLV).

The protein localises to the cytoplasmic vesicle membrane. It localises to the early endosome membrane. It carries out the reaction S-ubiquitinyl-[E2 ubiquitin-conjugating enzyme]-L-cysteine + [acceptor protein]-L-lysine = [E2 ubiquitin-conjugating enzyme]-L-cysteine + N(6)-ubiquitinyl-[acceptor protein]-L-lysine.. Its pathway is protein modification; protein ubiquitination. Its function is as follows. E3 ubiquitin-protein ligase which may be involved in endosomal trafficking. E3 ubiquitin ligases accept ubiquitin from an E2 ubiquitin-conjugating enzyme in the form of a thioester and then directly transfer the ubiquitin to targeted substrates. This Xenopus laevis (African clawed frog) protein is E3 ubiquitin-protein ligase MARCHF3 (marchf3).